The primary structure comprises 529 residues: UDP-glucuronosyltransferase 2B11 (529 aa).

The first 21 residues, 1–21 (MTLKWTSVLLLIHLSCYFSSG), serve as a signal peptide directing secretion. An N6-succinyllysine modification is found at lysine 135. N-linked (GlcNAc...) asparagine glycosylation occurs at asparagine 315. A helical transmembrane segment spans residues 493 to 513 (VIGFLLACVATVIFIITKFCL).

It belongs to the UDP-glycosyltransferase family. As to expression, widely expressed.

Its subcellular location is the microsome membrane. It is found in the endoplasmic reticulum membrane. The catalysed reaction is glucuronate acceptor + UDP-alpha-D-glucuronate = acceptor beta-D-glucuronoside + UDP + H(+). UDPGT is of major importance in the conjugation and subsequent elimination of potentially toxic xenobiotics and endogenous compounds. The protein is UDP-glucuronosyltransferase 2B11 (UGT2B11) of Homo sapiens (Human).